The following is a 193-amino-acid chain: Guanylate kinase (193 aa).

Residues Asp12 to Asn191 enclose the Guanylate kinase-like domain. An ATP-binding site is contributed by Gly19 to Gly26.

Belongs to the guanylate kinase family.

The protein localises to the cytoplasm. The enzyme catalyses GMP + ATP = GDP + ADP. In terms of biological role, essential for recycling GMP and indirectly, cGMP. This Tropheryma whipplei (strain TW08/27) (Whipple's bacillus) protein is Guanylate kinase.